The following is a 664-amino-acid chain: Acid beta-fructofuranosidase 4, vacuolar (664 aa).

Topologically, residues 1-43 are cytoplasmic; it reads MASSDALLPISAREEEPLCPYTRLPMADPNQETHGPRRRRPFK. A propeptide spans 1 to 108 (removed in mature form); sequence MASSDALLPI…WKLSGDRNTP (108 aa). 2 consecutive short sequence motifs (critical for endoplasmic reticulum export) follow at residues 7-8 and 9-10; these read LL and PI. Positions 14–16 match the Critical for trafficking from the trans-Golgi network to the prevacuolar compartment and from the prevacuolar compartment to the central vacuole motif; sequence EEE. A helical; Signal-anchor for type II membrane protein membrane pass occupies residues 44–64; it reads GLLAVSFGLLFIAFYVALIAT. Over 65 to 664 the chain is Lumenal; sequence HDGSRSNDEG…DEAVRALSRT (600 aa). Asparagine 113 carries an N-linked (GlcNAc...) asparagine glycan. Substrate is bound by residues 132 to 135, glutamine 151, tryptophan 159, 194 to 195, and 258 to 259; these read WMND, WT, and RD. Residue aspartate 135 is part of the active site. N-linked (GlcNAc...) (complex) asparagine glycosylation occurs at asparagine 280. Substrate is bound by residues glutamate 313 and aspartate 346. N-linked (GlcNAc...) asparagine glycans are attached at residues asparagine 362 and asparagine 498. Residues cysteine 510 and cysteine 558 are joined by a disulfide bond.

The protein belongs to the glycosyl hydrolase 32 family. As to quaternary structure, may be present in two forms, a 70 kDa monomer and a heterodimer of the 30 kDa and 38 kDa subunits. The ratio of the levels of the two forms within cells appears to be regulated developmentally. Mostly expressed in stems, roots and flowers, and, to a lower extent, in mature leaves.

It is found in the vacuole. The protein resides in the endoplasmic reticulum membrane. It localises to the golgi apparatus membrane. The protein localises to the golgi apparatus. Its subcellular location is the trans-Golgi network membrane. It is found in the prevacuolar compartment membrane. The protein resides in the vacuole membrane. It localises to the vacuole lumen. It catalyses the reaction Hydrolysis of terminal non-reducing beta-D-fructofuranoside residues in beta-D-fructofuranosides.. The protein operates within glycan biosynthesis; sucrose metabolism. Its activity is regulated as follows. Inhibited by C/VIF1 and C/VIF2. Its function is as follows. Possible role in the continued mobilization of sucrose to sink organs. Regulates root elongation. The sequence is that of Acid beta-fructofuranosidase 4, vacuolar from Arabidopsis thaliana (Mouse-ear cress).